Consider the following 207-residue polypeptide: NAD(P)H-quinone oxidoreductase subunit K, chloroplastic (207 aa).

[4Fe-4S] cluster-binding residues include Cys-47, Cys-48, Cys-112, and Cys-143.

It belongs to the complex I 20 kDa subunit family. NDH is composed of at least 16 different subunits, 5 of which are encoded in the nucleus. [4Fe-4S] cluster is required as a cofactor.

It localises to the plastid. The protein resides in the chloroplast thylakoid membrane. The catalysed reaction is a plastoquinone + NADH + (n+1) H(+)(in) = a plastoquinol + NAD(+) + n H(+)(out). The enzyme catalyses a plastoquinone + NADPH + (n+1) H(+)(in) = a plastoquinol + NADP(+) + n H(+)(out). Its function is as follows. NDH shuttles electrons from NAD(P)H:plastoquinone, via FMN and iron-sulfur (Fe-S) centers, to quinones in the photosynthetic chain and possibly in a chloroplast respiratory chain. The immediate electron acceptor for the enzyme in this species is believed to be plastoquinone. Couples the redox reaction to proton translocation, and thus conserves the redox energy in a proton gradient. The chain is NAD(P)H-quinone oxidoreductase subunit K, chloroplastic from Psilotum nudum (Whisk fern).